The sequence spans 156 residues: Snaclec subunit B (156 aa).

The N-terminal stretch at 1 to 23 is a signal peptide; that stretch reads MGRSIFVNLGLLVVAFSLRGSEA. Cystine bridges form between cysteine 25–cysteine 36, cysteine 53–cysteine 144, and cysteine 119–cysteine 136. Residues 32-145 form the C-type lectin domain; it reads YDKYCYKVFD…CKSTLPFTCK (114 aa).

This sequence belongs to the snaclec family. Heterodimer of subunits A and B; disulfide-linked. As to expression, expressed by the venom gland.

Its subcellular location is the secreted. Interferes with one step of hemostasis (modulation of platelet aggregation, or coagulation cascade, for example). This chain is Snaclec subunit B, found in Philodryas olfersii (Green snake).